A 181-amino-acid chain; its full sequence is Dual-action ribosomal maturation protein DarP (181 aa).

Residues 1 to 23 form a disordered region; it reads MTGIKKPMSQYQDDNELEDWGPS.

Belongs to the DarP family.

It is found in the cytoplasm. Member of a network of 50S ribosomal subunit biogenesis factors which assembles along the 30S-50S interface, preventing incorrect 23S rRNA structures from forming. Promotes peptidyl transferase center (PTC) maturation. This Aeromonas salmonicida (strain A449) protein is Dual-action ribosomal maturation protein DarP.